Here is a 95-residue protein sequence, read N- to C-terminus: Large ribosomal subunit protein bL25 (95 aa).

The protein belongs to the bacterial ribosomal protein bL25 family. In terms of assembly, part of the 50S ribosomal subunit; part of the 5S rRNA/L5/L18/L25 subcomplex. Contacts the 5S rRNA. Binds to the 5S rRNA independently of L5 and L18.

This is one of the proteins that binds to the 5S RNA in the ribosome where it forms part of the central protuberance. The sequence is that of Large ribosomal subunit protein bL25 from Shewanella woodyi (strain ATCC 51908 / MS32).